The chain runs to 146 residues: Anti-sigma F factor (146 aa).

It belongs to the anti-sigma-factor family.

It catalyses the reaction L-seryl-[protein] + ATP = O-phospho-L-seryl-[protein] + ADP + H(+). The catalysed reaction is L-threonyl-[protein] + ATP = O-phospho-L-threonyl-[protein] + ADP + H(+). Binds to sigma F and blocks its ability to form an RNA polymerase holoenzyme (E-sigma F). Phosphorylates SpoIIAA on a serine residue. This phosphorylation may enable SpoIIAA to act as an anti-anti-sigma factor that counteracts SpoIIAB and thus releases sigma F from inhibition. This Lysinibacillus sphaericus (Bacillus sphaericus) protein is Anti-sigma F factor.